The chain runs to 215 residues: A-type ATP synthase subunit E (215 aa).

The protein belongs to the V-ATPase E subunit family. Has multiple subunits with at least A(3), B(3), C, D, E, F, H, I and proteolipid K(x).

The protein localises to the cell membrane. Component of the A-type ATP synthase that produces ATP from ADP in the presence of a proton gradient across the membrane. The protein is A-type ATP synthase subunit E of Thermofilum pendens (strain DSM 2475 / Hrk 5).